The following is a 261-amino-acid chain: Kallikrein 1-related peptidase b9 (261 aa).

The N-terminal stretch at 1–18 (MRFLILFLALSLGGIDAA) is a signal peptide. Residues 19–24 (PPVHSR) constitute a propeptide, activation peptide. The Peptidase S1 domain maps to 25–258 (IVGGFKCEKN…FTSWIKDTMA (234 aa)). 5 disulfides stabilise this stretch: Cys31–Cys173, Cys50–Cys66, Cys152–Cys219, Cys184–Cys198, and Cys209–Cys234. Catalysis depends on His65, which acts as the Charge relay system. The N-linked (GlcNAc...) asparagine glycan is linked to Asn102. The Charge relay system role is filled by Asp120. Ser213 serves as the catalytic Charge relay system.

Belongs to the peptidase S1 family. Kallikrein subfamily.

The enzyme catalyses Preferential cleavage of Arg-|-Xaa bonds in small molecule substrates. Highly selective action to release kallidin (lysyl-bradykinin) from kininogen involves hydrolysis of Met-|-Xaa or Leu-|-Xaa.. Its function is as follows. Glandular kallikreins cleave Met-Lys and Arg-Ser bonds in kininogen to release Lys-bradykinin. The protein is Kallikrein 1-related peptidase b9 (Klk1b9) of Mus musculus (Mouse).